A 160-amino-acid polypeptide reads, in one-letter code: Small ribosomal subunit protein uS7 (160 aa).

This sequence belongs to the universal ribosomal protein uS7 family. As to quaternary structure, part of the 30S ribosomal subunit. Contacts proteins S9 and S11.

One of the primary rRNA binding proteins, it binds directly to 16S rRNA where it nucleates assembly of the head domain of the 30S subunit. Is located at the subunit interface close to the decoding center, probably blocks exit of the E-site tRNA. The polypeptide is Small ribosomal subunit protein uS7 (Anaplasma marginale (strain Florida)).